The primary structure comprises 1051 residues: Exportin-T (1051 aa).

The protein belongs to the exportin family.

The protein resides in the nucleus. Its subcellular location is the cytoplasm. Its function is as follows. tRNA nucleus export receptor which facilitates tRNA translocation across the nuclear pore complex. Involved in pre-tRNA splicing, probably by affecting the interaction of pre-tRNA with splicing endonuclease. The protein is Exportin-T (LOS1) of Eremothecium gossypii (strain ATCC 10895 / CBS 109.51 / FGSC 9923 / NRRL Y-1056) (Yeast).